The sequence spans 417 residues: Gamma-glutamyl phosphate reductase (417 aa).

This sequence belongs to the gamma-glutamyl phosphate reductase family.

The protein resides in the cytoplasm. It catalyses the reaction L-glutamate 5-semialdehyde + phosphate + NADP(+) = L-glutamyl 5-phosphate + NADPH + H(+). It participates in amino-acid biosynthesis; L-proline biosynthesis; L-glutamate 5-semialdehyde from L-glutamate: step 2/2. Catalyzes the NADPH-dependent reduction of L-glutamate 5-phosphate into L-glutamate 5-semialdehyde and phosphate. The product spontaneously undergoes cyclization to form 1-pyrroline-5-carboxylate. This chain is Gamma-glutamyl phosphate reductase, found in Escherichia coli O6:H1 (strain CFT073 / ATCC 700928 / UPEC).